Here is a 288-residue protein sequence, read N- to C-terminus: Tryptophan 2,3-dioxygenase (288 aa).

Residues Phe57–His61, Tyr119, and Arg123 each bind substrate. His246 lines the heme pocket. Thr260 is a substrate binding site.

Belongs to the tryptophan 2,3-dioxygenase family. In terms of assembly, homotetramer. Heme serves as cofactor.

It carries out the reaction L-tryptophan + O2 = N-formyl-L-kynurenine. The protein operates within amino-acid degradation; L-tryptophan degradation via kynurenine pathway; L-kynurenine from L-tryptophan: step 1/2. Its function is as follows. Heme-dependent dioxygenase that catalyzes the oxidative cleavage of the L-tryptophan (L-Trp) pyrrole ring and converts L-tryptophan to N-formyl-L-kynurenine. Catalyzes the oxidative cleavage of the indole moiety. The sequence is that of Tryptophan 2,3-dioxygenase from Pseudomonas aeruginosa (strain UCBPP-PA14).